A 653-amino-acid polypeptide reads, in one-letter code: 23S rRNA 5-hydroxycytidine C2501 synthase (653 aa).

Belongs to the peptidase U32 family. Interacts with precursors of the 50S ribosomal subunit.

With respect to regulation, iron-sulfur clusters and prephenate are required for ho5C2501 formation. Responsible for the formation of the 5-hydroxycytidine modification at the C2501 position (ho5C2501) of 23S rRNA. May be a Fe-S protein that catalyzes ho5C2501 formation using prephenate as a hydroxyl group donor. This Escherichia coli (strain K12) protein is 23S rRNA 5-hydroxycytidine C2501 synthase.